The chain runs to 59 residues: Single-pass membrane and coiled-coil domain-containing protein 4 (59 aa).

The tract at residues 1 to 23 is disordered; the sequence is MRQLKGKPKKETSKDKKERKQAM. Basic and acidic residues predominate over residues 9-22; sequence KKETSKDKKERKQA. Positions 9–31 form a coiled coil; it reads KKETSKDKKERKQAMQEARQQIT. The helical transmembrane segment at 32 to 52 threads the bilayer; sequence TVVLPTLAVVVALIVVFVYVA.

It belongs to the SMCO4 family.

The protein localises to the membrane. This is Single-pass membrane and coiled-coil domain-containing protein 4 (smco4) from Xenopus laevis (African clawed frog).